The primary structure comprises 360 residues: 3-isopropylmalate dehydrogenase (360 aa).

Residue 76 to 89 (GPKWEPLDYSLRPE) participates in NAD(+) binding. Residues arginine 96, arginine 106, arginine 134, and aspartate 224 each contribute to the substrate site. Aspartate 224, aspartate 248, and aspartate 252 together coordinate Mg(2+). 282-294 (GSAPDIAGRGIAN) lines the NAD(+) pocket.

Belongs to the isocitrate and isopropylmalate dehydrogenases family. LeuB type 1 subfamily. Homodimer. Requires Mg(2+) as cofactor. Mn(2+) serves as cofactor.

The protein resides in the cytoplasm. The enzyme catalyses (2R,3S)-3-isopropylmalate + NAD(+) = 4-methyl-2-oxopentanoate + CO2 + NADH. It participates in amino-acid biosynthesis; L-leucine biosynthesis; L-leucine from 3-methyl-2-oxobutanoate: step 3/4. Functionally, catalyzes the oxidation of 3-carboxy-2-hydroxy-4-methylpentanoate (3-isopropylmalate) to 3-carboxy-4-methyl-2-oxopentanoate. The product decarboxylates to 4-methyl-2 oxopentanoate. The protein is 3-isopropylmalate dehydrogenase of Methylococcus capsulatus (strain ATCC 33009 / NCIMB 11132 / Bath).